Consider the following 98-residue polypeptide: NADH-ubiquinone oxidoreductase chain 4L (98 aa).

Transmembrane regions (helical) follow at residues 2 to 22 (PSTF…TLMF), 26 to 46 (LMST…MTSV), and 58 to 79 (PIPI…ALLV).

This sequence belongs to the complex I subunit 4L family. In terms of assembly, core subunit of respiratory chain NADH dehydrogenase (Complex I) which is composed of 45 different subunits.

It is found in the mitochondrion inner membrane. The enzyme catalyses a ubiquinone + NADH + 5 H(+)(in) = a ubiquinol + NAD(+) + 4 H(+)(out). Core subunit of the mitochondrial membrane respiratory chain NADH dehydrogenase (Complex I) which catalyzes electron transfer from NADH through the respiratory chain, using ubiquinone as an electron acceptor. Part of the enzyme membrane arm which is embedded in the lipid bilayer and involved in proton translocation. The sequence is that of NADH-ubiquinone oxidoreductase chain 4L from Mus musculus (Mouse).